The following is a 382-amino-acid chain: Rubredoxin-NAD(+) reductase (382 aa).

FAD is bound by residues 9-12 (TGLA), 33-34 (TA), Lys42, Val80, Glu156, Asp275, Val287, and Lys318.

Belongs to the FAD-dependent oxidoreductase family. In terms of assembly, homodimer. The cofactor is FAD.

The protein localises to the cytoplasm. The catalysed reaction is 2 reduced [rubredoxin] + NAD(+) + H(+) = 2 oxidized [rubredoxin] + NADH. Its pathway is hydrocarbon metabolism; alkane degradation. Functionally, involved in the hydrocarbon hydroxylating system, which transfers electrons from NADH to rubredoxin reductase and then through rubredoxin to alkane 1 monooxygenase. The protein is Rubredoxin-NAD(+) reductase (rubB) of Alcanivorax borkumensis (strain ATCC 700651 / DSM 11573 / NCIMB 13689 / SK2).